A 68-amino-acid chain; its full sequence is U4-agatoxin-Ao1a (68 aa).

The first 25 residues, 1–25 (MKKSTVIVLSLAAFVLLSVMQFSAA), serve as a signal peptide directing secretion. Residues 26-36 (EDIKMEVEEQR) constitute a propeptide that is removed on maturation. Intrachain disulfides connect Cys39–Cys52, Cys46–Cys57, Cys51–Cys66, and Cys59–Cys64.

This sequence belongs to the neurotoxin 33 family. In terms of tissue distribution, expressed by the venom gland.

The protein resides in the secreted. The sequence is that of U4-agatoxin-Ao1a from Agelena orientalis (Funnel-web spider).